The following is a 423-amino-acid chain: Protein CLP1 homolog (423 aa).

Residues Glu-19, Lys-60, and 122–127 each bind ATP; that span reads DVGKTT.

The protein belongs to the Clp1 family. Clp1 subfamily.

Its subcellular location is the nucleus. Its function is as follows. Required for endonucleolytic cleavage during polyadenylation-dependent pre-mRNA 3'-end formation. The chain is Protein CLP1 homolog (cbc) from Culex quinquefasciatus (Southern house mosquito).